The sequence spans 273 residues: Large ribosomal subunit protein uL2 (273 aa).

A disordered region spans residues 221–262 (RGTAMNPVDHPHGGGEGRNFGKHPVTPWGVQTKGKKTRHNKR). Over residues 253–262 (KGKKTRHNKR) the composition is skewed to basic residues.

This sequence belongs to the universal ribosomal protein uL2 family. In terms of assembly, part of the 50S ribosomal subunit. Forms a bridge to the 30S subunit in the 70S ribosome.

Its function is as follows. One of the primary rRNA binding proteins. Required for association of the 30S and 50S subunits to form the 70S ribosome, for tRNA binding and peptide bond formation. It has been suggested to have peptidyltransferase activity; this is somewhat controversial. Makes several contacts with the 16S rRNA in the 70S ribosome. The polypeptide is Large ribosomal subunit protein uL2 (Haemophilus influenzae (strain ATCC 51907 / DSM 11121 / KW20 / Rd)).